Here is a 301-residue protein sequence, read N- to C-terminus: Light-independent protochlorophyllide reductase iron-sulfur ATP-binding protein (301 aa).

The segment covering 1 to 13 (MNVTLRPPLTTAP) has biased composition (low complexity). The tract at residues 1–21 (MNVTLRPPLTTAPRRPDGAGS) is disordered. ATP contacts are provided by residues 45 to 50 (GIGKST) and Lys-74. Ser-49 is a Mg(2+) binding site. Cys-130 and Cys-164 together coordinate [4Fe-4S] cluster. ATP is bound by residues 215–216 (NR) and 239–241 (PDL).

This sequence belongs to the NifH/BchL/ChlL family. In terms of assembly, homodimer. Protochlorophyllide reductase is composed of three subunits; BchL, BchN and BchB. It depends on [4Fe-4S] cluster as a cofactor.

The catalysed reaction is chlorophyllide a + oxidized 2[4Fe-4S]-[ferredoxin] + 2 ADP + 2 phosphate = protochlorophyllide a + reduced 2[4Fe-4S]-[ferredoxin] + 2 ATP + 2 H2O. Its pathway is porphyrin-containing compound metabolism; bacteriochlorophyll biosynthesis (light-independent). Component of the dark-operative protochlorophyllide reductase (DPOR) that uses Mg-ATP and reduced ferredoxin to reduce ring D of protochlorophyllide (Pchlide) to form chlorophyllide a (Chlide). This reaction is light-independent. The L component serves as a unique electron donor to the NB-component of the complex, and binds Mg-ATP. This is Light-independent protochlorophyllide reductase iron-sulfur ATP-binding protein from Bradyrhizobium sp. (strain BTAi1 / ATCC BAA-1182).